Reading from the N-terminus, the 218-residue chain is ATP phosphoribosyltransferase (218 aa).

Belongs to the ATP phosphoribosyltransferase family. Short subfamily. As to quaternary structure, heteromultimer composed of HisG and HisZ subunits.

The protein localises to the cytoplasm. It catalyses the reaction 1-(5-phospho-beta-D-ribosyl)-ATP + diphosphate = 5-phospho-alpha-D-ribose 1-diphosphate + ATP. Its pathway is amino-acid biosynthesis; L-histidine biosynthesis; L-histidine from 5-phospho-alpha-D-ribose 1-diphosphate: step 1/9. Catalyzes the condensation of ATP and 5-phosphoribose 1-diphosphate to form N'-(5'-phosphoribosyl)-ATP (PR-ATP). Has a crucial role in the pathway because the rate of histidine biosynthesis seems to be controlled primarily by regulation of HisG enzymatic activity. This Lactiplantibacillus plantarum (strain ATCC BAA-793 / NCIMB 8826 / WCFS1) (Lactobacillus plantarum) protein is ATP phosphoribosyltransferase.